The following is a 199-amino-acid chain: MIASLRGKLLQLEIDRLVVEVSGVGYEVMIPFPLHLECKDKLNTEIYIHTFHSITDRGQRLFGFGSKKDRESFELIKSLHGIGELTALKILSFFQADDLYQIAKADDKKTLEKIPKVKGKTSEKILFEIKQNLKKFEMFLNEGTTESSFVDRETDLATLALIQLGFDEKSATKQVADAKKLNPGLSASDIVKQVITGTR.

A domain I region spans residues 1 to 65 (MIASLRGKLL…DRGQRLFGFG (65 aa)). Residues 66–144 (SKKDRESFEL…KFEMFLNEGT (79 aa)) form a domain II region. The segment at 145-155 (TESSFVDRETD) is flexible linker. The domain III stretch occupies residues 155-199 (DLATLALIQLGFDEKSATKQVADAKKLNPGLSASDIVKQVITGTR).

This sequence belongs to the RuvA family. Homotetramer. Forms an RuvA(8)-RuvB(12)-Holliday junction (HJ) complex. HJ DNA is sandwiched between 2 RuvA tetramers; dsDNA enters through RuvA and exits via RuvB. An RuvB hexamer assembles on each DNA strand where it exits the tetramer. Each RuvB hexamer is contacted by two RuvA subunits (via domain III) on 2 adjacent RuvB subunits; this complex drives branch migration. In the full resolvosome a probable DNA-RuvA(4)-RuvB(12)-RuvC(2) complex forms which resolves the HJ.

The protein localises to the cytoplasm. Its function is as follows. The RuvA-RuvB-RuvC complex processes Holliday junction (HJ) DNA during genetic recombination and DNA repair, while the RuvA-RuvB complex plays an important role in the rescue of blocked DNA replication forks via replication fork reversal (RFR). RuvA specifically binds to HJ cruciform DNA, conferring on it an open structure. The RuvB hexamer acts as an ATP-dependent pump, pulling dsDNA into and through the RuvAB complex. HJ branch migration allows RuvC to scan DNA until it finds its consensus sequence, where it cleaves and resolves the cruciform DNA. The protein is Holliday junction branch migration complex subunit RuvA of Leptospira biflexa serovar Patoc (strain Patoc 1 / Ames).